The sequence spans 218 residues: UPF0502 protein VS_II0353 (218 aa).

This sequence belongs to the UPF0502 family.

The protein is UPF0502 protein VS_II0353 of Vibrio atlanticus (strain LGP32) (Vibrio splendidus (strain Mel32)).